Consider the following 727-residue polypeptide: Glucans biosynthesis glucosyltransferase H (727 aa).

The interval Ser-18–Thr-45 is disordered. 7 helical membrane-spanning segments follow: residues Phe-58–Val-78, Leu-90–Ile-110, Leu-278–Val-298, Ile-408–Ala-428, Leu-460–Leu-480, Ile-496–Ile-516, and Leu-572–Trp-592.

It belongs to the glycosyltransferase 2 family. OpgH subfamily.

The protein localises to the cell inner membrane. The protein operates within glycan metabolism; osmoregulated periplasmic glucan (OPG) biosynthesis. Involved in the biosynthesis of osmoregulated periplasmic glucans (OPGs). The polypeptide is Glucans biosynthesis glucosyltransferase H (Shewanella putrefaciens (strain CN-32 / ATCC BAA-453)).